A 286-amino-acid chain; its full sequence is Energy-coupling factor transporter ATP-binding protein EcfA2 (286 aa).

The ABC transporter domain maps to 3–246; that stretch reads IQFNQVSYIY…KTQLLKWHIE (244 aa). 40–47 provides a ligand contact to ATP; that stretch reads GQTGSGKS.

Belongs to the ABC transporter superfamily. Energy-coupling factor EcfA family. Forms a stable energy-coupling factor (ECF) transporter complex composed of 2 membrane-embedded substrate-binding proteins (S component), 2 ATP-binding proteins (A component) and 2 transmembrane proteins (T component).

It localises to the cell membrane. ATP-binding (A) component of a common energy-coupling factor (ECF) ABC-transporter complex. Unlike classic ABC transporters this ECF transporter provides the energy necessary to transport a number of different substrates. The protein is Energy-coupling factor transporter ATP-binding protein EcfA2 of Staphylococcus epidermidis (strain ATCC 35984 / DSM 28319 / BCRC 17069 / CCUG 31568 / BM 3577 / RP62A).